A 47-amino-acid polypeptide reads, in one-letter code: Large ribosomal subunit protein uL14c (47 aa).

It belongs to the universal ribosomal protein uL14 family. As to quaternary structure, part of the 50S ribosomal subunit.

Its subcellular location is the plastid. It is found in the chloroplast. Binds to 23S rRNA. The chain is Large ribosomal subunit protein uL14c (rpl14) from Vigna unguiculata (Cowpea).